Reading from the N-terminus, the 1073-residue chain is Pharyngeal muscle protein 2 (1073 aa).

Residues 9–43 (INDLRVSELKTELEKRGLSTQGVKVVLTVRLNKAL) form the SAP domain. 3 disordered regions span residues 59–186 (VSPM…PEVV), 207–305 (ELKE…SMET), and 337–388 (LLED…KSML). A compositionally biased stretch (acidic residues) spans 91–111 (EGNDENVLVEEKEEEEEEEDS). The span at 112 to 127 (HDLQIIEDHELEVPSD) shows a compositional bias: basic and acidic residues. Positions 128–151 (EKDDTLVEDEEFEEAEQVEPEPEA) are enriched in acidic residues. 2 stretches are compositionally biased toward basic and acidic residues: residues 156 to 182 (VEEK…KPVE) and 207 to 217 (ELKEKPEKEPE). 2 stretches are compositionally biased toward acidic residues: residues 223–232 (EPVEQLENEP) and 248–265 (QDGE…DIEI). Residues 277–293 (AEEKVEKKEKKPEEIPH) show a composition bias toward basic and acidic residues. The segment covering 366–386 (ASTPQATPSKAASSSAGSGKS) has biased composition (low complexity). An RRM domain is found at 396 to 478 (TSIWIRGMTP…RVLRVEKVSE (83 aa)). 3 disordered regions span residues 481 to 759 (LTSS…ERRR), 845 to 917 (QEHR…RNLV), and 1015 to 1073 (SQNA…RGNY). Low complexity-rich tracts occupy residues 496–505 (EAASTMSTSP) and 513–524 (PVVTTTTTTSAA). Over residues 573-587 (ITFDREEESNRDSRR) the composition is skewed to basic and acidic residues. A compositionally biased stretch (low complexity) spans 588–622 (TIAAAPPARTSRMARSPLRAPLRAARGSESSRSST). Positions 674–689 (VTVQQDAPRASYQTEQ) are enriched in polar residues. Basic and acidic residues-rich tracts occupy residues 707 to 727 (VSPD…RRAP) and 742 to 759 (PPRR…ERRR). Low complexity-rich tracts occupy residues 901–917 (SSSN…RNLV), 1015–1026 (SQNAATPSTSTS), and 1034–1060 (QWQQ…SSSN).

In terms of tissue distribution, expressed in most tissues including the hypodermal, muscle, neuronal, vulval and intestinal tissues. Isoform a: Expressed in the pharynx, nerve ring, intestine, neurons and ventral nerve cord.

It localises to the nucleus. Its function is as follows. Involved in pharyngeal muscle development and ensures pharyngeal grinder function during feeding. Plays a role in the defense against the accumulation of ingested live pathogenic bacteria in the intestine. Has a role in the determination of life span. The chain is Pharyngeal muscle protein 2 from Caenorhabditis elegans.